The primary structure comprises 227 residues: Cytidylate kinase (227 aa).

Gly-12 to Thr-20 contacts ATP.

It belongs to the cytidylate kinase family. Type 1 subfamily.

The protein resides in the cytoplasm. It catalyses the reaction CMP + ATP = CDP + ADP. The enzyme catalyses dCMP + ATP = dCDP + ADP. The sequence is that of Cytidylate kinase from Xanthomonas axonopodis pv. citri (strain 306).